Here is a 194-residue protein sequence, read N- to C-terminus: A-type ATP synthase subunit E (194 aa).

This sequence belongs to the V-ATPase E subunit family. Has multiple subunits with at least A(3), B(3), C, D, E, F, H, I and proteolipid K(x).

It localises to the cell membrane. In terms of biological role, component of the A-type ATP synthase that produces ATP from ADP in the presence of a proton gradient across the membrane. The polypeptide is A-type ATP synthase subunit E (Saccharolobus solfataricus (strain ATCC 35092 / DSM 1617 / JCM 11322 / P2) (Sulfolobus solfataricus)).